Consider the following 188-residue polypeptide: Ribosome-recycling factor (188 aa).

Belongs to the RRF family.

The protein localises to the cytoplasm. Functionally, responsible for the release of ribosomes from messenger RNA at the termination of protein biosynthesis. May increase the efficiency of translation by recycling ribosomes from one round of translation to another. The protein is Ribosome-recycling factor of Caulobacter vibrioides (strain NA1000 / CB15N) (Caulobacter crescentus).